A 596-amino-acid chain; its full sequence is Interleukin-1 receptor-associated kinase 3 (596 aa).

A Death domain is found at 41 to 106; that stretch reads WRGLAERLSS…RAIHLITNYG (66 aa). Residue S110 is modified to Phosphoserine; by IRAK1. The 288-residue stretch at 165-452 folds into the Protein kinase domain; the sequence is FHKDFLIGEG…LESTQASLYF (288 aa). ATP is bound by residues 171 to 179, K192, 295 to 298, and D311; these read IGEGEIFEV and SSAN. Position 467 is a phosphoserine (S467). The tract at residues 560–596 is disordered; the sequence is NIDPSSEAPGHSCRSRPVESSCSSKFSWDEYEQYKKE.

The protein belongs to the protein kinase superfamily. TKL Ser/Thr protein kinase family. Pelle subfamily. As to quaternary structure, monomer. Homodimer; disulfide-linked. May interact with IRAK4 (when phosphorylated). Interacts (when phosphorylated at Ser-110) with PIN1 (via WW domain) in response to IL33-mediated (but not TLR4 ligand LPS) dendritic cell stimulation. Expressed in eosinophils, dendritic cells and/or monocytes (at protein level). Expressed predominantly in peripheral blood lymphocytes.

Its subcellular location is the cytoplasm. The protein resides in the nucleus. Putative inactive protein kinase which regulates signaling downstream of immune receptors including IL1R and Toll-like receptors. Inhibits dissociation of IRAK1 and IRAK4 from the Toll-like receptor signaling complex by either inhibiting the phosphorylation of IRAK1 and IRAK4 or stabilizing the receptor complex. Upon IL33-induced lung inflammation, positively regulates expression of IL6, CSF3, CXCL2 and CCL5 mRNAs in dendritic cells. This chain is Interleukin-1 receptor-associated kinase 3, found in Homo sapiens (Human).